Consider the following 488-residue polypeptide: 3-octaprenyl-4-hydroxybenzoate carboxy-lyase (488 aa).

Asn-172 contributes to the Mn(2+) binding site. Residues 175–177, 189–191, and 194–195 each bind prenylated FMN; these read IYR, RWL, and RG. Glu-238 serves as a coordination point for Mn(2+). Residue Asp-287 is the Proton donor of the active site.

The protein belongs to the UbiD family. As to quaternary structure, homohexamer. Prenylated FMN is required as a cofactor. Mn(2+) serves as cofactor.

It localises to the cell membrane. It carries out the reaction a 4-hydroxy-3-(all-trans-polyprenyl)benzoate + H(+) = a 2-(all-trans-polyprenyl)phenol + CO2. The protein operates within cofactor biosynthesis; ubiquinone biosynthesis. Functionally, catalyzes the decarboxylation of 3-octaprenyl-4-hydroxy benzoate to 2-octaprenylphenol, an intermediate step in ubiquinone biosynthesis. The sequence is that of 3-octaprenyl-4-hydroxybenzoate carboxy-lyase from Legionella pneumophila (strain Lens).